An 841-amino-acid polypeptide reads, in one-letter code: DNA ligase (841 aa).

NAD(+) is bound by residues 54–58 (DAEYD), 103–104 (SL), and glutamate 143. Lysine 145 acts as the N6-AMP-lysine intermediate in catalysis. Positions 166, 203, 321, and 345 each coordinate NAD(+). Zn(2+) contacts are provided by cysteine 471, cysteine 474, cysteine 489, and cysteine 495. The segment at 554–575 (KTVAESDQMPSEGSSVGASGKH) is disordered. Residues 561–570 (QMPSEGSSVG) show a composition bias toward polar residues. The BRCT domain occupies 764–841 (GINKAVAGKT…SEAELLTLLG (78 aa)).

The protein belongs to the NAD-dependent DNA ligase family. LigA subfamily. Mg(2+) is required as a cofactor. It depends on Mn(2+) as a cofactor.

The enzyme catalyses NAD(+) + (deoxyribonucleotide)n-3'-hydroxyl + 5'-phospho-(deoxyribonucleotide)m = (deoxyribonucleotide)n+m + AMP + beta-nicotinamide D-nucleotide.. DNA ligase that catalyzes the formation of phosphodiester linkages between 5'-phosphoryl and 3'-hydroxyl groups in double-stranded DNA using NAD as a coenzyme and as the energy source for the reaction. It is essential for DNA replication and repair of damaged DNA. This Neisseria meningitidis serogroup C (strain 053442) protein is DNA ligase.